A 286-amino-acid polypeptide reads, in one-letter code: ATP synthase gamma chain (286 aa).

This sequence belongs to the ATPase gamma chain family. In terms of assembly, F-type ATPases have 2 components, CF(1) - the catalytic core - and CF(0) - the membrane proton channel. CF(1) has five subunits: alpha(3), beta(3), gamma(1), delta(1), epsilon(1). CF(0) has three main subunits: a, b and c.

The protein localises to the cell inner membrane. Functionally, produces ATP from ADP in the presence of a proton gradient across the membrane. The gamma chain is believed to be important in regulating ATPase activity and the flow of protons through the CF(0) complex. This Pseudoalteromonas translucida (strain TAC 125) protein is ATP synthase gamma chain.